The primary structure comprises 299 residues: Acetylglutamate kinase (299 aa).

Residues 66–67 (GG), Arg88, and Asn196 contribute to the substrate site.

It belongs to the acetylglutamate kinase family. ArgB subfamily.

Its subcellular location is the cytoplasm. It carries out the reaction N-acetyl-L-glutamate + ATP = N-acetyl-L-glutamyl 5-phosphate + ADP. It participates in amino-acid biosynthesis; L-arginine biosynthesis; N(2)-acetyl-L-ornithine from L-glutamate: step 2/4. Its function is as follows. Catalyzes the ATP-dependent phosphorylation of N-acetyl-L-glutamate. The protein is Acetylglutamate kinase of Alcanivorax borkumensis (strain ATCC 700651 / DSM 11573 / NCIMB 13689 / SK2).